Reading from the N-terminus, the 295-residue chain is tRNA pseudouridine synthase B (295 aa).

D42 serves as the catalytic Nucleophile.

This sequence belongs to the pseudouridine synthase TruB family. Type 1 subfamily.

It catalyses the reaction uridine(55) in tRNA = pseudouridine(55) in tRNA. In terms of biological role, responsible for synthesis of pseudouridine from uracil-55 in the psi GC loop of transfer RNAs. The chain is tRNA pseudouridine synthase B from Cutibacterium acnes (strain DSM 16379 / KPA171202) (Propionibacterium acnes).